A 159-amino-acid chain; its full sequence is Probable carbonic anhydrase (159 aa).

Substrate-binding positions include 33–35 (RGD) and 48–49 (QD). Positions 54, 71, and 76 each coordinate Zn(2+).

Belongs to the gamma-class carbonic anhydrase family. The cofactor is Zn(2+).

The enzyme catalyses hydrogencarbonate + H(+) = CO2 + H2O. Probably reversibly hydrates carbon dioxide. This Methanocaldococcus jannaschii (strain ATCC 43067 / DSM 2661 / JAL-1 / JCM 10045 / NBRC 100440) (Methanococcus jannaschii) protein is Probable carbonic anhydrase.